Reading from the N-terminus, the 155-residue chain is Protein-export protein SecB (155 aa).

Belongs to the SecB family. In terms of assembly, homotetramer, a dimer of dimers. One homotetramer interacts with 1 SecA dimer.

The protein localises to the cytoplasm. Its function is as follows. One of the proteins required for the normal export of preproteins out of the cell cytoplasm. It is a molecular chaperone that binds to a subset of precursor proteins, maintaining them in a translocation-competent state. It also specifically binds to its receptor SecA. This chain is Protein-export protein SecB, found in Escherichia fergusonii (strain ATCC 35469 / DSM 13698 / CCUG 18766 / IAM 14443 / JCM 21226 / LMG 7866 / NBRC 102419 / NCTC 12128 / CDC 0568-73).